Consider the following 880-residue polypeptide: MAQCSGLPEMAKAYEAAEVEKKWYQYWMEKGYFKPNPDSDKKPFVIIMPPPNVTGELHLGHALTATLEDIMIRWHRMLGEPALWLPGADHAGIAAQVVVERMLAKQGKTRQELGRELFLEKMWEWVNPCRERIRHQHMRLGASCDWDRETFTLDPGPVKAVREIFTNLYQKGLIYRGERIINWCPRCATAVSDLEVDHKDLAGHIWHLRYPLEDGSGFVTVATTRPETMLGDTAVAVHPDDARYTGMVGKNVLLPIMNRRIPVIADEAVDMAFGTGAVKVTPAHDPNDFEMGLRHSLPMITIQNRDTTMNENAGPCSGMTAKACREYVVSELKSLGLLLKIEDYTHSVGHCQRCSAVIEPMVSKQWFVKMEPLAKPALEAVNSGRIQILPERFTKVYQNWMENIRDWCISRQLWWGHRIPVWYCPCGEMIVSKEDPTACPKCGSTKLEQDPDVLDTWFSSGLWPHSTLGWPDQTEDLKRFYPGSVLETAYDIIFFWVARMIVMGIEDMKEVPFRTVYLHGLIRDDKGEKMSKTKGNVIDPLKVIDQYGTDALRFAVTFGTSPGNDSKLGQTKLEAARNFVNKLWNASRFVIMNLGEEKELLPEAGLPLEDRWILSRMNRVTADVIRLMEEFQFGEAQRVLQDFVWGEFCDWYIELAKVRLRDEASVSPRPVLVKVLSTILRLLHPYMPFITEELWSYLRPYLPKSLGETDIIVAPFPQADETCFDEQAESIMGSLVEVVRSLRNLRAEHNVEISRYIQANIYAGDMAEVLSNYLGAVETLSRSRPVNILPGHYSGASTATEVVLVLNGIEVVVPMSTMVDLEAEAKRVEAEIAELETQIERLSARLSDTQFLAKAPQAVVDKERTKLEGYIEKVSRLKAV.

Residues 51–61 (PNVTGELHLGH) carry the 'HIGH' region motif. A 'KMSKS' region motif is present at residues 529 to 533 (KMSKT). Lysine 532 contributes to the ATP binding site. Positions 815–854 (MSTMVDLEAEAKRVEAEIAELETQIERLSARLSDTQFLAK) form a coiled coil.

The protein belongs to the class-I aminoacyl-tRNA synthetase family. ValS type 1 subfamily. Monomer.

Its subcellular location is the cytoplasm. The catalysed reaction is tRNA(Val) + L-valine + ATP = L-valyl-tRNA(Val) + AMP + diphosphate. Functionally, catalyzes the attachment of valine to tRNA(Val). As ValRS can inadvertently accommodate and process structurally similar amino acids such as threonine, to avoid such errors, it has a 'posttransfer' editing activity that hydrolyzes mischarged Thr-tRNA(Val) in a tRNA-dependent manner. This Dehalococcoides mccartyi (strain ATCC BAA-2266 / KCTC 15142 / 195) (Dehalococcoides ethenogenes (strain 195)) protein is Valine--tRNA ligase.